Reading from the N-terminus, the 153-residue chain is Bud site selection protein 25 (153 aa).

Functionally, involved in bud site selection. Required for resistance to the DNA-damaging agent methyl methanesulfonate (MMS). The polypeptide is Bud site selection protein 25 (Saccharomyces cerevisiae (strain ATCC 204508 / S288c) (Baker's yeast)).